A 418-amino-acid polypeptide reads, in one-letter code: MTNGNLLYAQSGGVTAVINATAAGVIGEARARKIKVLAARNGILGALREELIDTSKESAAAIAALAQTPGGAFGSCRYKLKSLEQDRAKYERLLEVLRAHDVRWFLYNGGNDSADTALKVSQLAKAFGYPLHCIGVPKTIDNDLAVTDTCPGFGSAAKYTAVSVREAALDVAAMADTSTKVFIYEAMGRHAGWLAAAAGLAGQGPDDAPQIILLPERAFDQAAFLAKVRQMVERVGWCVVVASEGIQDAQGKFVADAGGATDSFGHAQLGGVASFLAAQVKQELGYKVHWTLPDYLQRSARHLASKTDWEQAQAVGKAAVQYALKGMNAVIPVIERVSDAPYRWKIVPAPLHKVANHEKKMPPSFLRKDGFGITERARRYFAPLIKGEAPLAYGSDGLPKYVSLKNVAVAKKLPAWEG.

Gly-13 contributes to the diphosphate binding site. Asn-111 is a binding site for Mg(2+). Substrate-binding positions include 139 to 141 (TID), 187 to 189 (MGR), Glu-244, and 295 to 298 (YLQR). Catalysis depends on Asp-141, which acts as the Proton acceptor.

The protein belongs to the phosphofructokinase type A (PFKA) family. PPi-dependent PFK group II subfamily. Clade 'B2' sub-subfamily. Homodimer. The cofactor is Mg(2+).

Its subcellular location is the cytoplasm. It catalyses the reaction beta-D-fructose 6-phosphate + diphosphate = beta-D-fructose 1,6-bisphosphate + phosphate + H(+). It functions in the pathway carbohydrate degradation; glycolysis; D-glyceraldehyde 3-phosphate and glycerone phosphate from D-glucose: step 3/4. Its activity is regulated as follows. Non-allosteric. Catalyzes the phosphorylation of D-fructose 6-phosphate, the first committing step of glycolysis. Uses inorganic phosphate (PPi) as phosphoryl donor instead of ATP like common ATP-dependent phosphofructokinases (ATP-PFKs), which renders the reaction reversible, and can thus function both in glycolysis and gluconeogenesis. Consistently, PPi-PFK can replace the enzymes of both the forward (ATP-PFK) and reverse (fructose-bisphosphatase (FBPase)) reactions. This is Pyrophosphate--fructose 6-phosphate 1-phosphotransferase from Xanthomonas campestris pv. campestris (strain B100).